A 629-amino-acid chain; its full sequence is 1-deoxy-D-xylulose-5-phosphate synthase (629 aa).

Thiamine diphosphate-binding positions include H73 and 114 to 116 (GHA). D145 serves as a coordination point for Mg(2+). Residues 146–147 (GA), N174, Y284, and E360 each bind thiamine diphosphate. Mg(2+) is bound at residue N174.

This sequence belongs to the transketolase family. DXPS subfamily. As to quaternary structure, homodimer. It depends on Mg(2+) as a cofactor. The cofactor is thiamine diphosphate.

It catalyses the reaction D-glyceraldehyde 3-phosphate + pyruvate + H(+) = 1-deoxy-D-xylulose 5-phosphate + CO2. The protein operates within metabolic intermediate biosynthesis; 1-deoxy-D-xylulose 5-phosphate biosynthesis; 1-deoxy-D-xylulose 5-phosphate from D-glyceraldehyde 3-phosphate and pyruvate: step 1/1. Its function is as follows. Catalyzes the acyloin condensation reaction between C atoms 2 and 3 of pyruvate and glyceraldehyde 3-phosphate to yield 1-deoxy-D-xylulose-5-phosphate (DXP). The polypeptide is 1-deoxy-D-xylulose-5-phosphate synthase (Thermomicrobium roseum (strain ATCC 27502 / DSM 5159 / P-2)).